Here is a 299-residue protein sequence, read N- to C-terminus: Probable GTP 3',8-cyclase (299 aa).

Positions 4–229 constitute a Radical SAM core domain; the sequence is LHNREIKSLR…MQNRKKYLVD (226 aa). Arg13 is a GTP binding site. [4Fe-4S] cluster contacts are provided by Cys20 and Cys24. S-adenosyl-L-methionine is bound at residue Tyr26. Position 27 (Cys27) interacts with [4Fe-4S] cluster. GTP is bound at residue Lys61. Gly65 is an S-adenosyl-L-methionine binding site. Thr94 serves as a coordination point for GTP. Ser118 serves as a coordination point for S-adenosyl-L-methionine. Lys154 serves as a coordination point for GTP. [4Fe-4S] cluster is bound by residues Cys245 and Cys248. 250–252 lines the GTP pocket; the sequence is RIR. Cys262 lines the [4Fe-4S] cluster pocket.

It belongs to the radical SAM superfamily. MoaA family. [4Fe-4S] cluster is required as a cofactor.

The catalysed reaction is GTP + AH2 + S-adenosyl-L-methionine = (8S)-3',8-cyclo-7,8-dihydroguanosine 5'-triphosphate + 5'-deoxyadenosine + L-methionine + A + H(+). Its pathway is cofactor biosynthesis; molybdopterin biosynthesis. Catalyzes the cyclization of GTP to (8S)-3',8-cyclo-7,8-dihydroguanosine 5'-triphosphate. The polypeptide is Probable GTP 3',8-cyclase (Methanococcus aeolicus (strain ATCC BAA-1280 / DSM 17508 / OCM 812 / Nankai-3)).